A 514-amino-acid polypeptide reads, in one-letter code: Peptide chain release factor 3 (514 aa).

One can recognise a tr-type G domain in the interval 8 to 268 (KKRRTFAIIS…TFLEFAPEPH (261 aa)). GTP is bound by residues 17–24 (SHPDAGKT), 85–89 (DTPGH), and 139–142 (NKLD).

This sequence belongs to the TRAFAC class translation factor GTPase superfamily. Classic translation factor GTPase family. PrfC subfamily.

It is found in the cytoplasm. In terms of biological role, increases the formation of ribosomal termination complexes and stimulates activities of RF-1 and RF-2. It binds guanine nucleotides and has strong preference for UGA stop codons. It may interact directly with the ribosome. The stimulation of RF-1 and RF-2 is significantly reduced by GTP and GDP, but not by GMP. The chain is Peptide chain release factor 3 from Streptococcus pyogenes serotype M28 (strain MGAS6180).